The following is a 201-amino-acid chain: Sterile alpha motif domain-containing protein 12 (201 aa).

Residues 77–143 enclose the SAM domain; that stretch reads WTQQDVCKWL…LQQVLQLKVR (67 aa).

In terms of tissue distribution, expressed in the brain.

This Homo sapiens (Human) protein is Sterile alpha motif domain-containing protein 12 (SAMD12).